A 67-amino-acid chain; its full sequence is Penaeidin-4d (67 aa).

Residues 1–19 (MRLLVCLVFLASFAMVCQG) form the signal peptide. Cystine bridges form between C42–C56, C45–C63, and C57–C64. Leucine amide is present on L66.

This sequence belongs to the penaeidin family.

The protein localises to the cytoplasmic granule. Its function is as follows. Antibacterial and antifungal activity. Presents chitin-binding activity. The sequence is that of Penaeidin-4d from Penaeus setiferus (Atlantic white shrimp).